A 359-amino-acid chain; its full sequence is DNA polymerase IV (359 aa).

In terms of domain architecture, UmuC spans Ile-4 to Gly-184. Mg(2+)-binding residues include Asp-8 and Asp-102. Glu-103 is a catalytic residue.

This sequence belongs to the DNA polymerase type-Y family. In terms of assembly, monomer. It depends on Mg(2+) as a cofactor.

The protein resides in the cytoplasm. It carries out the reaction DNA(n) + a 2'-deoxyribonucleoside 5'-triphosphate = DNA(n+1) + diphosphate. In terms of biological role, poorly processive, error-prone DNA polymerase involved in untargeted mutagenesis. Copies undamaged DNA at stalled replication forks, which arise in vivo from mismatched or misaligned primer ends. These misaligned primers can be extended by PolIV. Exhibits no 3'-5' exonuclease (proofreading) activity. May be involved in translesional synthesis, in conjunction with the beta clamp from PolIII. This chain is DNA polymerase IV, found in Xanthomonas oryzae pv. oryzae (strain MAFF 311018).